Here is a 139-residue protein sequence, read N- to C-terminus: MAVCIAVIAKENYPLYIRSTPTENELKFHYMVHTSLDVVDEKISAMGKALVDQRELYLGLLYPTEDYKVYGYVTNSKVKFVMVVDSSNTALRDNEIRSMFRKLHNSYTDVMCNPFYNPGDRIQSRAFDTMVTSMMVQVC.

The protein belongs to the TRAPP small subunits family. Sedlin subfamily. Component of the multisubunit TRAPP (transport protein particle) complex, which includes at least TRAPPC2, TRAPPC2L, TRAPPC3, TRAPPC3L, TRAPPC4, TRAPPC5, TRAPPC8, TRAPPC9, TRAPPC10, TRAPPC11 and TRAPPC12. Interacts with the heterodimer TRAPPC3-TRAPPC6A.

The protein resides in the cytoplasm. It is found in the perinuclear region. It localises to the endoplasmic reticulum. Its subcellular location is the golgi apparatus. May play a role in vesicular transport from endoplasmic reticulum to Golgi. The polypeptide is Trafficking protein particle complex subunit 2-like protein (Trappc2l) (Rattus norvegicus (Rat)).